The chain runs to 92 residues: Large ribosomal subunit protein eL31 (92 aa).

Belongs to the eukaryotic ribosomal protein eL31 family.

The chain is Large ribosomal subunit protein eL31 from Haloquadratum walsbyi (strain DSM 16790 / HBSQ001).